We begin with the raw amino-acid sequence, 207 residues long: Uracil phosphoribosyltransferase (207 aa).

Residues arginine 77, arginine 102, and 129–137 contribute to the 5-phospho-alpha-D-ribose 1-diphosphate site; that span reads DPMLATGGS. Uracil is bound by residues isoleucine 192 and 197 to 199; that span reads GDA. Aspartate 198 is a 5-phospho-alpha-D-ribose 1-diphosphate binding site.

This sequence belongs to the UPRTase family. Mg(2+) is required as a cofactor.

It carries out the reaction UMP + diphosphate = 5-phospho-alpha-D-ribose 1-diphosphate + uracil. It functions in the pathway pyrimidine metabolism; UMP biosynthesis via salvage pathway; UMP from uracil: step 1/1. With respect to regulation, allosterically activated by GTP. Its function is as follows. Catalyzes the conversion of uracil and 5-phospho-alpha-D-ribose 1-diphosphate (PRPP) to UMP and diphosphate. This chain is Uracil phosphoribosyltransferase, found in Mycoplasma mycoides subsp. mycoides SC (strain CCUG 32753 / NCTC 10114 / PG1).